The sequence spans 505 residues: Glycerol kinase (505 aa).

ADP is bound at residue T15. ATP contacts are provided by T15, T16, and S17. T15 provides a ligand contact to sn-glycerol 3-phosphate. Position 19 (R19) interacts with ADP. R85, E86, Y136, and D249 together coordinate sn-glycerol 3-phosphate. Glycerol is bound by residues R85, E86, Y136, D249, and Q250. T271 and G314 together coordinate ADP. ATP-binding residues include T271, G314, Q318, and G415. 2 residues coordinate ADP: G415 and N419.

It belongs to the FGGY kinase family.

The enzyme catalyses glycerol + ATP = sn-glycerol 3-phosphate + ADP + H(+). Its pathway is polyol metabolism; glycerol degradation via glycerol kinase pathway; sn-glycerol 3-phosphate from glycerol: step 1/1. Inhibited by fructose 1,6-bisphosphate (FBP). In terms of biological role, key enzyme in the regulation of glycerol uptake and metabolism. Catalyzes the phosphorylation of glycerol to yield sn-glycerol 3-phosphate. In Mycoplasma mycoides subsp. mycoides SC (strain CCUG 32753 / NCTC 10114 / PG1), this protein is Glycerol kinase.